The chain runs to 214 residues: Adenylate kinase (214 aa).

10 to 15 (GAGKGT) contributes to the ATP binding site. Residues 30–59 (STGDMFRDHKARGTEIGKQVQAIMDAGGLV) are NMP. AMP is bound by residues T31, R36, 57–59 (GLV), 85–88 (GYPR), and Q92. An LID region spans residues 126–163 (GRRSCPRCGAVYHVSQNPPHRAGFCDRDDTALVQREDD). R127 contributes to the ATP binding site. The Zn(2+) site is built by C130 and C133. 136–137 (VY) contributes to the ATP binding site. C150 and D153 together coordinate Zn(2+). AMP is bound by residues R160 and R171. G199 is a binding site for ATP.

This sequence belongs to the adenylate kinase family. Monomer.

It is found in the cytoplasm. It catalyses the reaction AMP + ATP = 2 ADP. It functions in the pathway purine metabolism; AMP biosynthesis via salvage pathway; AMP from ADP: step 1/1. Catalyzes the reversible transfer of the terminal phosphate group between ATP and AMP. Plays an important role in cellular energy homeostasis and in adenine nucleotide metabolism. The polypeptide is Adenylate kinase (Anaeromyxobacter sp. (strain K)).